The chain runs to 185 residues: Urease accessory protein UreE (185 aa).

A disordered region spans residues 153 to 185 (LRANSAQGHGHSHSHSHDHHGYHHHGDGNWHKH). Over residues 162-175 (GHSHSHSHDHHGYH) the composition is skewed to basic residues. Residues 176–185 (HHGDGNWHKH) are compositionally biased toward basic and acidic residues.

It belongs to the UreE family.

The protein localises to the cytoplasm. Its function is as follows. Involved in urease metallocenter assembly. Binds nickel. Probably functions as a nickel donor during metallocenter assembly. The polypeptide is Urease accessory protein UreE (Haemophilus influenzae (strain PittGG)).